Reading from the N-terminus, the 1138-residue chain is Transmembrane channel-like protein 3 (1138 aa).

Low complexity predominate over residues 1 to 15; the sequence is MEAAPGTAAAAAKPA. Disordered stretches follow at residues 1–20 and 29–54; these read MEAA…SCKK and NIYT…DSQD. Topologically, residues 1-155 are cytoplasmic; it reads MEAAPGTAAA…VASYFIFLRW (155 aa). The helical transmembrane segment at 156 to 176 threads the bilayer; the sequence is LFGINIVLTIMTGAFVVLPEL. Topologically, residues 177 to 202 are extracellular; the sequence is LAGAPFGSTVSKTIRQEDLKTAQDLD. The helical transmembrane segment at 203-223 threads the bilayer; the sequence is TIWSLGGYLQYSVLFYGYYGS. Residues 224–233 are Cytoplasmic-facing; sequence DRKIGKAGYR. The chain crosses the membrane as a helical span at residues 234-254; sequence LPLAYFLVGMAVFAYSFIILL. At 255-327 the chain is on the extracellular side; sequence KKMAKNSRMS…KNLAVTISLR (73 aa). N272 carries N-linked (GlcNAc...) asparagine glycosylation. A helical membrane pass occupies residues 328 to 348; sequence IIANILVLLSLTGSIYIIYFV. Over 349 to 369 the chain is Cytoplasmic; the sequence is VDRSQKLENNKRELTLWEKNE. Residues 370–390 traverse the membrane as a helical segment; the sequence is VSVVVSLITMIAPSAFELVAA. Residues 391–401 are Extracellular-facing; that stretch reads LEMYHPRTTLR. A helical transmembrane segment spans residues 402–422; sequence FQLARVLVLYLGNLYSLIIAL. Residues 423–508 lie on the Cytoplasmic side of the membrane; it reads LDKVNSMSVT…CWETYVGQEM (86 aa). Residues 509 to 529 traverse the membrane as a helical segment; the sequence is LKLSIIDMIFTVASILLIDFF. Residues 530-569 lie on the Extracellular side of the membrane; the sequence is RGLCVRYLSDCWCWDLESKFPEYGEFKIAENVLHLVYNQG. Residues 570–590 traverse the membrane as a helical segment; it reads MIWMGAFFSPCLPAFNVLKLI. At 591–618 the chain is on the cytoplasmic side; that stretch reads GLMYLRSWAVLTCNVPHQQVFRASRSNN. Residues 619–639 form a helical membrane-spanning segment; sequence FYLAMLLFMLFLCMLPTIFAI. The Extracellular portion of the chain corresponds to 640–676; it reads ARYKPSLSCGPFSGQEKIYDIVSETIQNDFPAWFNSV. A helical transmembrane segment spans residues 677-697; the sequence is IAYISSPVVVLPALLLLFMLI. At 698–1138 the chain is on the cytoplasmic side; the sequence is YYLQSIARSL…EPNELVCSNV (441 aa). A compositionally biased stretch (polar residues) spans 753–763; the sequence is NSEGTRFQSLD. Disordered regions lie at residues 753–859, 973–1005, and 1065–1095; these read NSEG…RYPS, SPHP…DLRP, and PKTK…SSND. A compositionally biased stretch (basic and acidic residues) spans 764-773; that stretch reads GSDKRPDKDG. 2 stretches are compositionally biased toward polar residues: residues 777 to 795 and 804 to 813; these read SQES…SVLN and TRIQTISQTV. Positions 828–845 are enriched in low complexity; the sequence is TTPTTSASLTPAPSVSSA. Over residues 989–998 the composition is skewed to basic residues; it reads HYVKRSHRPR. The span at 1074–1095 shows a compositional bias: low complexity; it reads SLTESDSVSIESSSDPQNSSND.

This sequence belongs to the TMC family. As to expression, expressed in a range of tissues including cerebrum, cerebellum, retina, cochlea, lung, liver and heart. Also expressed in the apical, medial and basal portions of the basillar papilla.

It is found in the membrane. Probable component of an ion channel. This chain is Transmembrane channel-like protein 3, found in Gallus gallus (Chicken).